The chain runs to 77 residues: Translation initiation factor IF-1, chloroplastic (77 aa).

The region spanning 1-71 is the S1-like domain; the sequence is MKEQKLIHEG…TRGRIIYRLR (71 aa).

This sequence belongs to the IF-1 family. Component of the 30S ribosomal translation pre-initiation complex which assembles on the 30S ribosome in the order IF-2 and IF-3, IF-1 and N-formylmethionyl-tRNA(fMet); mRNA recruitment can occur at any time during PIC assembly.

It localises to the plastid. The protein resides in the chloroplast. Functionally, one of the essential components for the initiation of protein synthesis. Stabilizes the binding of IF-2 and IF-3 on the 30S subunit to which N-formylmethionyl-tRNA(fMet) subsequently binds. Helps modulate mRNA selection, yielding the 30S pre-initiation complex (PIC). Upon addition of the 50S ribosomal subunit IF-1, IF-2 and IF-3 are released leaving the mature 70S translation initiation complex. The sequence is that of Translation initiation factor IF-1, chloroplastic from Phalaenopsis aphrodite subsp. formosana (Moth orchid).